The sequence spans 537 residues: Cytochrome P450 monooxygenase yanC (537 aa).

Residues 1–21 (MALVHLTALAACGLLLVILRA) form the signal peptide. C449 lines the heme pocket.

This sequence belongs to the cytochrome P450 family. The cofactor is heme.

It functions in the pathway secondary metabolite biosynthesis; terpenoid biosynthesis. Its function is as follows. Cytochrome P450 monooxygenase; part of the gene cluster that mediates the biosynthesis of yanuthone D, a fungal isoprenoid epoxycyclohexenone that acts as an antibiotic against fungi and bacteria. The first step of the pathway is the synthesis of 6-methylsalicylic acid (6-MSA) by the polyketide synthase yanA. 6-MSA is then converted to m-cresol by the decarboxylase yanB. The cytochrome P450 monooxygenase yanC then catalyzes the oxidation of m-cresol to toluquinol. Epoxidation of toluquinol is then performed by the short chain dehydrogenase yanD, with the help of yanE, and a further prenylation by yanG leads to 7-deacetoxyyanuthone A. The next step is the hydroxylation of C-22 of 7-deacetoxyyanuthone A by the cytochrome P450 monooxygenase yanH to yield 22-deacetylyanuthone A. O-Mevalon transferase yanI then attaches mevalon to the hydroxyl group of 22-deacetylyanuthone A to produce yanuthone E. Finally, the FAD-dependent monooxygenase yanF oxidizes the hydroxyl group at C15 of yanuthone E to form yanuthone D. Furthermore, several branching points in the pathway lead to the production of yanuthones F and G from 7-deacetoxyyanuthone A; yanuthones H and I from 22-deacetylyanuthone A; and yanuthone J from yanuthone E. YanC is also involved in the synthesis of yanuthone X1 which does not have 6-methylsalicylic acid (6-MSA) as precursor. This chain is Cytochrome P450 monooxygenase yanC, found in Aspergillus niger (strain ATCC 1015 / CBS 113.46 / FGSC A1144 / LSHB Ac4 / NCTC 3858a / NRRL 328 / USDA 3528.7).